Consider the following 277-residue polypeptide: Adenylate kinase (277 aa).

72–77 is an ATP binding site; that stretch reads GAGKGT. The interval 92-121 is NMP; sequence ATGDMLRSQVAKQTALGVQAKKIMDQGGLV. Residues threonine 93, arginine 98, 119 to 121, 148 to 151, and glutamine 155 each bind AMP; these read GLV and GFPR. Positions 189–226 are LID; it reads GRLVHPASGRSYHKLFNPPKVAMTDDVTGDPLVQRSDD. Residues arginine 190 and 199–200 contribute to the ATP site; that span reads SY. Residues arginine 223 and arginine 234 each contribute to the AMP site. Glutamine 262 contributes to the ATP binding site.

The protein belongs to the adenylate kinase family. AK2 subfamily. In terms of assembly, monomer.

It localises to the cytoplasm. The protein resides in the cytosol. It is found in the mitochondrion intermembrane space. It carries out the reaction AMP + ATP = 2 ADP. Its function is as follows. Catalyzes the reversible transfer of the terminal phosphate group between ATP and AMP. Plays an important role in cellular energy homeostasis and in adenine nucleotide metabolism. Adenylate kinase activity is critical for regulation of the phosphate utilization and the AMP de novo biosynthesis pathways. This is Adenylate kinase from Eremothecium gossypii (strain ATCC 10895 / CBS 109.51 / FGSC 9923 / NRRL Y-1056) (Yeast).